The following is a 176-amino-acid chain: Ribosome rescue factor SmrB (176 aa).

In terms of domain architecture, Smr spans 93 to 168 (LDLHGYRQSE…GDAALLVLID (76 aa)).

Belongs to the SmrB family. Associates with collided ribosomes, but not with correctly translating polysomes.

In terms of biological role, acts as a ribosome collision sensor. Detects stalled/collided disomes (pairs of ribosomes where the leading ribosome is stalled and a second ribosome has collided with it) and endonucleolytically cleaves mRNA at the 5' boundary of the stalled ribosome. Stalled/collided disomes form a new interface (primarily via the 30S subunits) that binds SmrB. Cleaved mRNA becomes available for tmRNA ligation, leading to ribosomal subunit dissociation and rescue of stalled ribosomes. The sequence is that of Ribosome rescue factor SmrB from Shewanella baltica (strain OS155 / ATCC BAA-1091).